The sequence spans 143 residues: Flagellar assembly factor FliW (143 aa).

This sequence belongs to the FliW family. In terms of assembly, interacts with translational regulator CsrA and flagellin(s).

It localises to the cytoplasm. In terms of biological role, acts as an anti-CsrA protein, binds CsrA and prevents it from repressing translation of its target genes, one of which is flagellin. Binds to flagellin and participates in the assembly of the flagellum. The protein is Flagellar assembly factor FliW of Bacillus velezensis (strain DSM 23117 / BGSC 10A6 / LMG 26770 / FZB42) (Bacillus amyloliquefaciens subsp. plantarum).